Consider the following 719-residue polypeptide: Protein lin-15A (719 aa).

Disordered stretches follow at residues 179-199, 419-464, 559-626, and 684-719; these read FSHFPSEPSPSKPRATREGSQ, YRDH…SISW, LTTA…PTKT, and AKQVAAAPSEPKHIPPTHMEKKPEELLMDPKPEPIF. Positions 570–579 are enriched in low complexity; it reads STSTDSSSSS. The segment covering 604 to 617 has biased composition (polar residues); the sequence is LLQNKPTHVESSSP. Positions 693–719 are enriched in basic and acidic residues; sequence EPKHIPPTHMEKKPEELLMDPKPEPIF.

The protein localises to the nucleus. Functionally, synthetic multivulva (synMuv) class A protein. SynMuv proteins are required to repress the induction of vulval development. Acts redundantly with SynMuv class B protein lin-15B, and lin-35 to negatively regulate vulval development, most likely through antagonization of the Ras-signaling pathway. May also negatively regulate vulval development in association with other SynMuv class B proteins such as dpl-1 and efl-1. Regulates let-23 basal activity. Required for the correct expression and/or stability of lin-56. The chain is Protein lin-15A from Caenorhabditis elegans.